Consider the following 476-residue polypeptide: MNNAVKEQLAELGIEGYLNQHQHKSLLRFLTCGSVDDGKSTLIGRLLHDSKQIYEDQLAAVHNDSQRVGTTGSRPDLALLVDGLQAEREQGITIDVAYRYFSTQKRKFIIADTPGHEQYTRNMATGASTCDLAVILIDARKGVLDQTRRHSFISNLLGLKHFIVAVNKMDLVDYSQDRFEQIRAEYLEFSKHLQGETEIQIIPLSALEGDNVVEKSRLMDWYQGPSLLELLENVDIDRDKSSGAFRFPVQYVNRPNLDFRGFAGTIASGVVKVGDKIKALPSGKTSTVTRIVTFDGDLPQAQAGLAVTLTLADEIDISRGDLIVLESAQVDSTNHLLADVVWMTEQPLQVGRDYDIKIAGKKTVGQVKAVRHQYDINNLSTYHAESLPLNGIGLCEWTFTQTVALDKYLDCADTGGFIIIDRLTNVTVGAGLVRDSLQNITGQTESFSAFELELNALVRKHFPHWQAIDLSRLGKA.

The tr-type G domain maps to 24–240 (KSLLRFLTCG…LENVDIDRDK (217 aa)). Residues 33–40 (GSVDDGKS) form a G1 region. 33–40 (GSVDDGKS) is a GTP binding site. Residues 91 to 95 (GITID) form a G2 region. Residues 112-115 (DTPG) form a G3 region. GTP-binding positions include 112-116 (DTPGH) and 167-170 (NKMD). The segment at 167-170 (NKMD) is G4. A G5 region spans residues 205–207 (SAL).

The protein belongs to the TRAFAC class translation factor GTPase superfamily. Classic translation factor GTPase family. CysN/NodQ subfamily. In terms of assembly, heterodimer composed of CysD, the smaller subunit, and CysN.

It catalyses the reaction sulfate + ATP + H(+) = adenosine 5'-phosphosulfate + diphosphate. It participates in sulfur metabolism; hydrogen sulfide biosynthesis; sulfite from sulfate: step 1/3. Functionally, with CysD forms the ATP sulfurylase (ATPS) that catalyzes the adenylation of sulfate producing adenosine 5'-phosphosulfate (APS) and diphosphate, the first enzymatic step in sulfur assimilation pathway. APS synthesis involves the formation of a high-energy phosphoric-sulfuric acid anhydride bond driven by GTP hydrolysis by CysN coupled to ATP hydrolysis by CysD. The sequence is that of Sulfate adenylyltransferase subunit 1 from Vibrio cholerae serotype O1 (strain ATCC 39541 / Classical Ogawa 395 / O395).